An 80-amino-acid polypeptide reads, in one-letter code: Cell division activator CedA (80 aa).

This sequence belongs to the CedA family.

Activates the cell division inhibited by chromosomal DNA over-replication. The sequence is that of Cell division activator CedA from Citrobacter koseri (strain ATCC BAA-895 / CDC 4225-83 / SGSC4696).